Here is a 407-residue protein sequence, read N- to C-terminus: Tryptophan synthase beta chain (407 aa).

Residues 1–11 are compositionally biased toward polar residues; sequence MSTAPSQQHAS. Residues 1–25 are disordered; that stretch reads MSTAPSQQHASAQVPDPRGRFGDFG. N6-(pyridoxal phosphate)lysine is present on lysine 100.

The protein belongs to the TrpB family. In terms of assembly, tetramer of two alpha and two beta chains. Pyridoxal 5'-phosphate serves as cofactor.

The catalysed reaction is (1S,2R)-1-C-(indol-3-yl)glycerol 3-phosphate + L-serine = D-glyceraldehyde 3-phosphate + L-tryptophan + H2O. It participates in amino-acid biosynthesis; L-tryptophan biosynthesis; L-tryptophan from chorismate: step 5/5. Functionally, the beta subunit is responsible for the synthesis of L-tryptophan from indole and L-serine. The sequence is that of Tryptophan synthase beta chain from Rhodopirellula baltica (strain DSM 10527 / NCIMB 13988 / SH1).